A 245-amino-acid chain; its full sequence is Derlin-1 (245 aa).

The Cytoplasmic segment spans residues 1–5; the sequence is MDLEN. A helical transmembrane segment spans residues 6-26; the sequence is FLLGIPIVTRYWFLASTIIPL. The Lumenal portion of the chain corresponds to 27–57; sequence LGRFGFINVQWMFLQWDLVVNKFQFWRPLTA. A helical transmembrane segment spans residues 58–78; that stretch reads LIYYPVTPQTGFHWLMMCYFL. Residues 79–100 are Cytoplasmic-facing; the sequence is YNYSKALESETYRGRSADYLFM. Residues 101–121 form a helical membrane-spanning segment; the sequence is LIFNWFFCSGLCMALDIYFLL. Residues 122-166 lie on the Lumenal side of the membrane; it reads EPMVISVLYVWCQVNKDTIVSFWFGMRFPARYLPWVLWGFNAVLR. A helical membrane pass occupies residues 167–187; sequence GGGTNELVGILVGHAYFFVAL. The Cytoplasmic portion of the chain corresponds to 188-245; the sequence is KYPDEYGVDLISTPEFLHRLIPDEDGGIHGQDGNIRGARQQPRGHQWPGGVGARLGGN. The tract at residues 218–245 is disordered; the sequence is QDGNIRGARQQPRGHQWPGGVGARLGGN. The segment covering 234–245 has biased composition (gly residues); that stretch reads WPGGVGARLGGN.

It belongs to the derlin family.

It localises to the endoplasmic reticulum membrane. In terms of biological role, specifically required for the degradation process of misfolded endoplasmic reticulum (ER) luminal proteins. Participates in the transfer of misfolded proteins from the ER to the cytosol, where they are destroyed by the proteasome in a ubiquitin-dependent manner. This chain is Derlin-1, found in Caenorhabditis elegans.